Here is a 113-residue protein sequence, read N- to C-terminus: Putative pterin-4-alpha-carbinolamine dehydratase (113 aa).

It belongs to the pterin-4-alpha-carbinolamine dehydratase family.

It catalyses the reaction (4aS,6R)-4a-hydroxy-L-erythro-5,6,7,8-tetrahydrobiopterin = (6R)-L-erythro-6,7-dihydrobiopterin + H2O. The polypeptide is Putative pterin-4-alpha-carbinolamine dehydratase (Nitrosospira multiformis (strain ATCC 25196 / NCIMB 11849 / C 71)).